A 338-amino-acid chain; its full sequence is MPGNGPAPAARGLRAAWRHRGPLACALLPLSLLYRALLGLHRLPYALGFRRAGQAGIPVIVVGNVIAGGAGKTPVTLALARHLRDSGWSPGIVSRGYGRSTDDCREATPESAPADVGDEPALLARASGVPVFVARKRIEAVQALRARHSQVDVVISDDGLQHLALARDIELCVFNDDGIGNGWLLPAGPLREPWPRPVTAVLHAGACPPTDAPAFAMQRQLAAEGVNAHGERIPLAALRGRPVEAVAAVARPEGFFSMLASEQDLALEHAQALPDHYNFESFQRLGRNEDPLVCTEKDAVKLWRTHPQAWSVALQLQLPPDFWALLDQRLQALRRPRA.

66–73 (IAGGAGKT) lines the ATP pocket.

Belongs to the LpxK family.

The enzyme catalyses a lipid A disaccharide + ATP = a lipid IVA + ADP + H(+). Its pathway is glycolipid biosynthesis; lipid IV(A) biosynthesis; lipid IV(A) from (3R)-3-hydroxytetradecanoyl-[acyl-carrier-protein] and UDP-N-acetyl-alpha-D-glucosamine: step 6/6. Transfers the gamma-phosphate of ATP to the 4'-position of a tetraacyldisaccharide 1-phosphate intermediate (termed DS-1-P) to form tetraacyldisaccharide 1,4'-bis-phosphate (lipid IVA). This Delftia acidovorans (strain DSM 14801 / SPH-1) protein is Tetraacyldisaccharide 4'-kinase.